The primary structure comprises 261 residues: uncharacterized protein (261 aa).

It belongs to the BtpA family.

This is an uncharacterized protein from Thermococcus kodakarensis (strain ATCC BAA-918 / JCM 12380 / KOD1) (Pyrococcus kodakaraensis (strain KOD1)).